The primary structure comprises 156 residues: Protein SprT (156 aa).

The SprT-like domain occupies Asn-15 to Leu-153. His-67 provides a ligand contact to Zn(2+). Glu-68 is an active-site residue. His-71 provides a ligand contact to Zn(2+).

The protein belongs to the SprT family. It depends on Zn(2+) as a cofactor.

It localises to the cytoplasm. The protein is Protein SprT of Glaesserella parasuis serovar 5 (strain SH0165) (Haemophilus parasuis).